The sequence spans 1446 residues: Major viral transcription factor ICP4 homolog (1446 aa).

4 disordered regions span residues 25–59 (AEEE…GGLF), 73–493 (AAAG…PPAD), 801–987 (PGPA…HTPR), and 1385–1446 (THRP…LLLR). A compositionally biased stretch (low complexity) spans 73 to 94 (AAAGATRPPRPPSAQQQQQPRR). Positions 101-112 (VLDDEDEEEDEP) are enriched in acidic residues. Low complexity-rich tracts occupy residues 166–189 (RSSP…APRR) and 216–241 (PAAV…PVSA). Positions 262 to 277 (REPLLDEPAAARRLDP) are enriched in basic and acidic residues. Low complexity-rich tracts occupy residues 284–306 (SPVS…ETVA) and 345–397 (GFSS…SSSS). The span at 415-426 (GPPPSPPAPAAA) shows a compositional bias: pro residues. A compositionally biased stretch (low complexity) spans 427-442 (PRPSASSASSSAAASP). Over residues 803-815 (PAEPAPGLPPLWP) the composition is skewed to pro residues. The segment covering 827-877 (PAAAGAPSGLPGSGPSSPASTKSSSSTKSSSSTKSGLSGSSGYASSPAAGP) has biased composition (low complexity). Residues 883-892 (RRKKKRRAPG) show a composition bias toward basic residues. Over residues 933–952 (LGLGPAPDPAPALLSSSSSS) the composition is skewed to low complexity.

This sequence belongs to the herpesviridae ICP4 family. In terms of processing, a long stretch of serine residues may be a major site of phosphorylation.

It localises to the host nucleus. In terms of biological role, this IE protein is a multifunctional protein capable of migrating to the nucleus, binding to DNA, trans-activating other viral genes, and autoregulating its own synthesis. This is Major viral transcription factor ICP4 homolog (IE) from Suid herpesvirus 1 (strain Kaplan) (SuHV-1).